The primary structure comprises 270 residues: tRNA pseudouridine synthase A (270 aa).

The active-site Nucleophile is D60. Positions 107 to 111 (FHARF) are RNA binding. Position 118 (Y118) interacts with substrate. The interval 168–172 (QCQSR) is interaction with tRNA.

The protein belongs to the tRNA pseudouridine synthase TruA family. In terms of assembly, homodimer.

It catalyses the reaction uridine(38/39/40) in tRNA = pseudouridine(38/39/40) in tRNA. Its function is as follows. Formation of pseudouridine at positions 38, 39 and 40 in the anticodon stem and loop of transfer RNAs. This Escherichia coli O139:H28 (strain E24377A / ETEC) protein is tRNA pseudouridine synthase A.